Reading from the N-terminus, the 525-residue chain is GMP synthase [glutamine-hydrolyzing] (525 aa).

The Glutamine amidotransferase type-1 domain occupies 8 to 207 (KILILDFGSQ…ALDICQCEAN (200 aa)). Residue cysteine 85 is the Nucleophile of the active site. Active-site residues include histidine 181 and glutamate 183. One can recognise a GMPS ATP-PPase domain in the interval 208-400 (WKPSSIIEDA…LGLPYNMLYR (193 aa)). 235-241 (SGGVDSS) contacts ATP.

In terms of assembly, homodimer.

It carries out the reaction XMP + L-glutamine + ATP + H2O = GMP + L-glutamate + AMP + diphosphate + 2 H(+). It participates in purine metabolism; GMP biosynthesis; GMP from XMP (L-Gln route): step 1/1. Its function is as follows. Catalyzes the synthesis of GMP from XMP. The chain is GMP synthase [glutamine-hydrolyzing] from Shewanella loihica (strain ATCC BAA-1088 / PV-4).